Consider the following 332-residue polypeptide: UPF0194 membrane protein YbhG (332 aa).

Positions 1–16 (MMKKPVVIGLAVVVLA) are cleaved as a signal peptide. The stretch at 141–210 (RTISANDLEN…NLQDSTLIAP (70 aa)) forms a coiled coil.

Belongs to the UPF0194 family.

It is found in the periplasm. The chain is UPF0194 membrane protein YbhG (ybhG) from Shigella flexneri.